Here is a 600-residue protein sequence, read N- to C-terminus: Forkhead box protein O (600 aa).

Residue Thr-49 is modified to Phosphothreonine; by PKB/AKT1. Ser-80 bears the Phosphoserine mark. Positions 100–206 (WGNLSYADLI…ETSRYEKRRG (107 aa)) form a DNA-binding region, fork-head. Disordered regions lie at residues 187 to 210 (KSVR…RAKK), 222 to 283 (GLND…LEPD), 319 to 364 (QQGF…TPGY), and 580 to 600 (LNAR…SWVH). Residue Ser-195 is modified to Phosphoserine; by PKB/AKT1. Composition is skewed to polar residues over residues 226-235 (ATPSPSSSVS) and 261-270 (RASSNASSCG). At Ser-264 the chain carries Phosphoserine; by PKB/AKT1. Ser-267, Ser-268, and Ser-273 each carry phosphoserine. Over residues 330–342 (TQPPPPPYQPPQP) the composition is skewed to pro residues. The span at 343–354 (QQQQQQGQQPSP) shows a compositional bias: low complexity.

Interacts with melt.

The protein localises to the cytoplasm. It localises to the nucleus. In terms of biological role, transcription factor involved in the regulation of the insulin signaling pathway. Consistently activates both the downstream target Thor\d4EBP and the feedback control target InR. Involved in negative regulation of the cell cycle, modulating cell growth and proliferation. In response to cellular stresses, such as nutrient deprivation or increased levels of reactive oxygen species, foxo is activated and inhibits growth through the action of target genes such as Thor. Foxo activated in the adult fat body can regulate lifespan in adults; an insulin peptide itself may function as one secondary messenger of insulin-regulated aging. Also regulates Lip4, homolog of human acid lipases, thereby acting as a key modulator of lipid metabolism by insulin signaling and integrates insulin responses to glucose and lipid homeostasis. The sequence is that of Forkhead box protein O from Drosophila ananassae (Fruit fly).